Reading from the N-terminus, the 384-residue chain is N-acetylneuraminate epimerase (384 aa).

The first 29 residues, 1-29, serve as a signal peptide directing secretion; sequence MGMQMKNFKKMMTLMALCLSVAITTSGYA. Kelch repeat units lie at residues 51 to 95, 97 to 149, 151 to 184, 185 to 230, 233 to 282, 304 to 353, and 355 to 384; these read VIYV…VFLN, KLYV…VKLN, TMVLITGGVNEHIFDKYFIDIAAADESEKNKVIY, NYFN…VMEN, LMLI…LAGA, QNYT…SYGD, and VFLIGGENAKGKPVSSVTSFTMRDGNLLIK. Glu-239 functions as the Proton acceptor in the catalytic mechanism.

Belongs to the NanM family. Homodimer.

The protein localises to the periplasm. It carries out the reaction N-acetyl-alpha-neuraminate = N-acetyl-beta-neuraminate. In terms of biological role, converts alpha-N-acetylneuranimic acid (Neu5Ac) to the beta-anomer, accelerating the equilibrium between the alpha- and beta-anomers. Probably facilitates sialidase-negative bacteria to compete successfully for limited amounts of extracellular Neu5Ac, which is likely taken up in the beta-anomer. In addition, the rapid removal of sialic acid from solution might be advantageous to the bacterium to damp down host responses. The sequence is that of N-acetylneuraminate epimerase from Salmonella typhi.